Here is a 419-residue protein sequence, read N- to C-terminus: Tyrosine--tRNA ligase (419 aa).

Y34 is a binding site for L-tyrosine. The 'HIGH' region signature appears at 39 to 48 (PSGDSMHIGH). The L-tyrosine site is built by Y168 and Q172. A 'KMSKS' region motif is present at residues 230-234 (KFGKS). An ATP-binding site is contributed by K233. Positions 352-418 (ANLVDWLVTL…GKKKYFLVSY (67 aa)) constitute an S4 RNA-binding domain.

Belongs to the class-I aminoacyl-tRNA synthetase family. TyrS type 1 subfamily. As to quaternary structure, homodimer.

The protein resides in the cytoplasm. The enzyme catalyses tRNA(Tyr) + L-tyrosine + ATP = L-tyrosyl-tRNA(Tyr) + AMP + diphosphate + H(+). Catalyzes the attachment of tyrosine to tRNA(Tyr) in a two-step reaction: tyrosine is first activated by ATP to form Tyr-AMP and then transferred to the acceptor end of tRNA(Tyr). The chain is Tyrosine--tRNA ligase from Listeria monocytogenes serotype 4b (strain CLIP80459).